The primary structure comprises 160 residues: SsrA-binding protein (160 aa).

Residues 134-160 (YDKRDTERERDSNRELHRAVRNKGKED) form a disordered region.

This sequence belongs to the SmpB family.

It is found in the cytoplasm. Required for rescue of stalled ribosomes mediated by trans-translation. Binds to transfer-messenger RNA (tmRNA), required for stable association of tmRNA with ribosomes. tmRNA and SmpB together mimic tRNA shape, replacing the anticodon stem-loop with SmpB. tmRNA is encoded by the ssrA gene; the 2 termini fold to resemble tRNA(Ala) and it encodes a 'tag peptide', a short internal open reading frame. During trans-translation Ala-aminoacylated tmRNA acts like a tRNA, entering the A-site of stalled ribosomes, displacing the stalled mRNA. The ribosome then switches to translate the ORF on the tmRNA; the nascent peptide is terminated with the 'tag peptide' encoded by the tmRNA and targeted for degradation. The ribosome is freed to recommence translation, which seems to be the essential function of trans-translation. This is SsrA-binding protein from Pseudomonas fluorescens (strain SBW25).